A 447-amino-acid chain; its full sequence is Glucose-6-phosphate isomerase (447 aa).

Catalysis depends on glutamate 289, which acts as the Proton donor. Active-site residues include histidine 310 and lysine 424.

Belongs to the GPI family.

Its subcellular location is the cytoplasm. The catalysed reaction is alpha-D-glucose 6-phosphate = beta-D-fructose 6-phosphate. Its pathway is carbohydrate biosynthesis; gluconeogenesis. It participates in carbohydrate degradation; glycolysis; D-glyceraldehyde 3-phosphate and glycerone phosphate from D-glucose: step 2/4. Its function is as follows. Catalyzes the reversible isomerization of glucose-6-phosphate to fructose-6-phosphate. This is Glucose-6-phosphate isomerase from Parabacteroides distasonis (strain ATCC 8503 / DSM 20701 / CIP 104284 / JCM 5825 / NCTC 11152).